Reading from the N-terminus, the 259-residue chain is UPF0246 protein Aave_1172 (259 aa).

This sequence belongs to the UPF0246 family.

The protein is UPF0246 protein Aave_1172 of Paracidovorax citrulli (strain AAC00-1) (Acidovorax citrulli).